We begin with the raw amino-acid sequence, 29 residues long: Cytochrome b6-f complex subunit 8 (29 aa).

Residues 3–23 form a helical membrane-spanning segment; it reads IVSLGWAFLMVVFSFSLSLVV.

This sequence belongs to the PetN family. In terms of assembly, the 4 large subunits of the cytochrome b6-f complex are cytochrome b6, subunit IV (17 kDa polypeptide, PetD), cytochrome f and the Rieske protein, while the 4 small subunits are PetG, PetL, PetM and PetN. The complex functions as a dimer.

The protein localises to the plastid. The protein resides in the chloroplast thylakoid membrane. Functionally, component of the cytochrome b6-f complex, which mediates electron transfer between photosystem II (PSII) and photosystem I (PSI), cyclic electron flow around PSI, and state transitions. This is Cytochrome b6-f complex subunit 8 from Chlorokybus atmophyticus (Soil alga).